We begin with the raw amino-acid sequence, 541 residues long: Halolysin-like extracellular serine protease Nep (541 aa).

The segment at residues Met1–Ala33 is a signal peptide (tat-type signal). The propeptide occupies Thr34–Val121. A Peptidase S8 domain is found at Gln130–Val405. Active-site charge relay system residues include Asp157, His198, and Ser351. Residues Leu403–Asp453 form a disordered region. Over residues Asp410–Asp432 the composition is skewed to acidic residues.

Belongs to the peptidase S8 family. Monomer. Post-translationally, exported by the Tat system. The position of the signal peptide cleavage has not been experimentally proven. After transport across the membrane, the propeptide is probably processed autocatalytically, yielding the mature fully active protease.

The protein resides in the secreted. With respect to regulation, dependent on high salt concentrations for activity and stability. Strongly inhibited by the serine protease inhibitors diisopropyl fluorophosphate (DFP), phenylmethyl sulfonylfluoride (PMSF) and chymostatin. Also inhibited by denaturing agents such as SDS, urea, and HCl guanidinium. Activated by thiol-containing reducing agents such as dithiotreitol (DTT) and 2-mercaptoethanol. Serine protease that hydrolyzes large proteins such as casein and gelatin. Cleaves preferentially at the carboxyl terminus of Phe, Tyr or Leu. Is also able to catalyze peptide synthesis under different salt concentrations in the presence of dimethyl sulfoxide (DMSO). The chain is Halolysin-like extracellular serine protease Nep from Natrialba magadii.